The primary structure comprises 346 residues: Cell division protein ZipA (346 aa).

Topologically, residues 1 to 6 are periplasmic; sequence MEDLQL. Residues 7–27 form a helical membrane-spanning segment; the sequence is VLFVLGAIAIVAVLVHGFWSI. The Cytoplasmic portion of the chain corresponds to 28–346; that stretch reads RRQQPKSLKD…DYLHRIRANA (319 aa). Disordered stretches follow at residues 76–103 and 121–145; these read ANEAHTPEAPAFNPYLKQEAKTQPQPVE and QPDFSLQSPTAKEQHRGPKASRQEP.

This sequence belongs to the ZipA family. Interacts with FtsZ via their C-terminal domains.

It localises to the cell inner membrane. In terms of biological role, essential cell division protein that stabilizes the FtsZ protofilaments by cross-linking them and that serves as a cytoplasmic membrane anchor for the Z ring. Also required for the recruitment to the septal ring of downstream cell division proteins. The protein is Cell division protein ZipA of Shewanella sp. (strain MR-4).